We begin with the raw amino-acid sequence, 593 residues long: Melanopsin-A (593 aa).

Over 1–77 (MMSGAAHSVR…VDVPDHAHYT (77 aa)) the chain is Extracellular. A helical transmembrane segment spans residues 78–98 (IGAVILTVGITGMLGNFLVIY). The Cytoplasmic portion of the chain corresponds to 99-112 (AFSRSRTLRTPANL). The helical transmembrane segment at 113–133 (FIINLAITDFLMCATQAPIFF) threads the bilayer. Over 134–150 (TTSMHKRWIFGEKGCEL) the chain is Extracellular. A disulfide bridge links C148 with C226. A helical transmembrane segment spans residues 151–171 (YAFCGALFGICSMITLMVIAV). The Cytoplasmic portion of the chain corresponds to 172-191 (DRYFVITRPLASIGVLSQKR). Residues 192-212 (ALLILLVAWVYSLGWSLPPFF) traverse the membrane as a helical segment. The Extracellular portion of the chain corresponds to 213-243 (GWSAYVPEGLLTSCTWDYMTFTPSVRAYTML). A helical membrane pass occupies residues 244-264 (LFIFVFFIPLIVIIYCYFFIF). Residues 265–300 (RSIRTTNEAVGKINGDNKRDSMKRFQRLKNEWKMAK) lie on the Cytoplasmic side of the membrane. A helical membrane pass occupies residues 301 to 321 (IALIVILMYVISWSPYSTVAL). Topologically, residues 322–336 (TAFAGYSDFLTPYMN) are extracellular. Residues 337–357 (SVPAVIAKASAIHNPIIYAIT) form a helical membrane-spanning segment. An N6-(retinylidene)lysine modification is found at K344. Topologically, residues 358-593 (HPKYRLAIAK…HIDNHRPQYL (236 aa)) are cytoplasmic. Disordered regions lie at residues 397-449 (TVTS…RQVS) and 547-593 (RSNV…PQYL). The span at 414–449 (TGKSRLSSASDSESGWTDTEADLSSMSSRPASRQVS) shows a compositional bias: polar residues. Positions 581-593 (ESGHIDNHRPQYL) are enriched in basic and acidic residues.

It belongs to the G-protein coupled receptor 1 family. Opsin subfamily.

It localises to the cell membrane. Its function is as follows. Photoreceptor implicated in non-image-forming responses to light. May be able to isomerize covalently bound all-trans retinal back to 11-cis retinal. This chain is Melanopsin-A (opn4a), found in Danio rerio (Zebrafish).